Here is a 373-residue protein sequence, read N- to C-terminus: P2Y purinoceptor 1 (373 aa).

Residues 1 to 51 (MTEVLWPAVPNGTDTAFLADPGSPWGNSTVTSTAAVASPFKCALTKTGFQF) lie on the Extracellular side of the membrane. N11 and N27 each carry an N-linked (GlcNAc...) asparagine glycan. Cystine bridges form between C42–C296 and C124–C202. Residue K46 participates in ADP binding. The helical transmembrane segment at 52 to 74 (YYLPAVYILVFIIGFLGNSVAIW) threads the bilayer. At 75 to 87 (MFVFHMKPWSGIS) the chain is on the cytoplasmic side. A helical membrane pass occupies residues 88–109 (VYMFNLALADFLYVLTLPALIF). Topologically, residues 110 to 125 (YYFNKTDWIFGDAMCK) are extracellular. A glycan (N-linked (GlcNAc...) asparagine) is linked at N113. The chain crosses the membrane as a helical span at residues 126-147 (LQRFIFHVNLYGSILFLTCISA). The Cytoplasmic segment spans residues 148–166 (HRYSGVVYPLKSLGRLKKK). Residues 167–188 (NAVYISVLVWLIVVVGISPILF) form a helical membrane-spanning segment. Residues 189-214 (YSGTGIRKNKTITCYDTTSDEYLRSY) lie on the Extracellular side of the membrane. N-linked (GlcNAc...) asparagine glycosylation occurs at N197. 203-205 (YDT) serves as a coordination point for ADP. Residues 215–237 (FIYSMCTTVAMFCVPLVLILGCY) traverse the membrane as a helical segment. The Cytoplasmic portion of the chain corresponds to 238 to 260 (GLIVRALIYKDLDNSPLRRKSIY). A helical membrane pass occupies residues 261-284 (LVIIVLTVFAVSYIPFHVMKTMNL). ADP is bound by residues 283 to 287 (NLRAR), 303 to 306 (YATY), and R310. Residues 285–303 (RARLDFQTPEMCAFNDRVY) lie on the Extracellular side of the membrane. Residues 304–325 (ATYQVTRGLASLNSCVDPILYF) traverse the membrane as a helical segment. Over 326 to 373 (LAGDTFRRRLSRATRKASRRSEANLQSKSEDMTLNILSEFKQNGDTSL) the chain is Cytoplasmic.

The protein belongs to the G-protein coupled receptor 1 family.

Its subcellular location is the cell membrane. Functionally, receptor for extracellular adenine nucleotides such as ADP. In platelets, binding to ADP leads to mobilization of intracellular calcium ions via activation of phospholipase C, a change in platelet shape, and ultimately platelet aggregation. This is P2Y purinoceptor 1 (P2RY1) from Bos taurus (Bovine).